We begin with the raw amino-acid sequence, 1291 residues long: Cytoplasmic FMR1-interacting protein (1291 aa).

A disordered region spans residues 1270–1291 (PSVISSSSHYQDPQKLRQSINN). Polar residues predominate over residues 1271-1291 (SVISSSSHYQDPQKLRQSINN).

This sequence belongs to the CYFIP family. Interacts with Fmr1 and Rac1. Component of the WAVE complex composed of Hem/Kette, Scar/Wave and Cyfip where it binds through its C-terminus directly to Hem. In the embryo, expressed mainly in the gut and in the developing central nervous system where high levels of expression are found in the CNS neuropile. Expression in the gut diminishes as development proceeds (at protein level). In the adult, expressed specifically in the nervous system.

The protein resides in the cytoplasm. Functionally, plays a role in guidance and morphology of central and peripheral axons and in synaptic morphology. Also required for formation of cell membrane protrusions and for bristle development. Plays a role in regulating mitochondrial activity, energy metabolism and membrane potential which maintains normal gamma-aminobutyric acid (GABA) signaling and ensures normal social behavior. This chain is Cytoplasmic FMR1-interacting protein, found in Drosophila melanogaster (Fruit fly).